Reading from the N-terminus, the 310-residue chain is Light-independent protochlorophyllide reductase iron-sulfur ATP-binding protein (310 aa).

Residues 53–58 (GIGKST) and Lys82 contribute to the ATP site. Position 57 (Ser57) interacts with Mg(2+). Cys138 and Cys172 together coordinate [4Fe-4S] cluster. Residues 223 to 224 (NR) and 247 to 249 (PAL) contribute to the ATP site.

The protein belongs to the NifH/BchL/ChlL family. As to quaternary structure, homodimer. Protochlorophyllide reductase is composed of three subunits; BchL, BchN and BchB. It depends on [4Fe-4S] cluster as a cofactor.

It carries out the reaction chlorophyllide a + oxidized 2[4Fe-4S]-[ferredoxin] + 2 ADP + 2 phosphate = protochlorophyllide a + reduced 2[4Fe-4S]-[ferredoxin] + 2 ATP + 2 H2O. It participates in porphyrin-containing compound metabolism; bacteriochlorophyll biosynthesis (light-independent). Functionally, component of the dark-operative protochlorophyllide reductase (DPOR) that uses Mg-ATP and reduced ferredoxin to reduce ring D of protochlorophyllide (Pchlide) to form chlorophyllide a (Chlide). This reaction is light-independent. The L component serves as a unique electron donor to the NB-component of the complex, and binds Mg-ATP. This Rhodopseudomonas palustris (strain BisA53) protein is Light-independent protochlorophyllide reductase iron-sulfur ATP-binding protein.